We begin with the raw amino-acid sequence, 440 residues long: Chromosomal replication initiator protein DnaA (440 aa).

The tract at residues 1 to 69 (MKERILQEIK…VKVVLGNDAT (69 aa)) is domain I, interacts with DnaA modulators. Residues 69–96 (TFEITYEAFEPHSSYSEPLVKKRAVLLT) form a domain II region. The tract at residues 97 to 313 (PLNPDYTFEN…GAIIKLLVYK (217 aa)) is domain III, AAA+ region. Residues Gly-140, Gly-142, Lys-143, and Thr-144 each coordinate ATP. The tract at residues 314 to 440 (ETTGKEVDLK…GEISRRALSG (127 aa)) is domain IV, binds dsDNA.

It belongs to the DnaA family. In terms of assembly, oligomerizes as a right-handed, spiral filament on DNA at oriC.

The protein resides in the cytoplasm. In terms of biological role, plays an essential role in the initiation and regulation of chromosomal replication. ATP-DnaA binds to the origin of replication (oriC) to initiate formation of the DNA replication initiation complex once per cell cycle. Binds the DnaA box (a 9 base pair repeat at the origin) and separates the double-stranded (ds)DNA. Forms a right-handed helical filament on oriC DNA; dsDNA binds to the exterior of the filament while single-stranded (ss)DNA is stabiized in the filament's interior. The ATP-DnaA-oriC complex binds and stabilizes one strand of the AT-rich DNA unwinding element (DUE), permitting loading of DNA polymerase. After initiation quickly degrades to an ADP-DnaA complex that is not apt for DNA replication. Binds acidic phospholipids. The sequence is that of Chromosomal replication initiator protein DnaA from Thermotoga sp. (strain RQ2).